A 303-amino-acid chain; its full sequence is WD repeat-containing protein 38 (303 aa).

7 WD repeats span residues 24–63, 66–105, 108–147, 150–189, 195–233, 236–277, and 279–303; these read QHHG…LLWR, GHRG…CLHV, GHQR…RVHL, GHCD…PVVS, GHTG…LPLQ, GHTI…ETLK, and MLDV…AVTR.

In Mus musculus (Mouse), this protein is WD repeat-containing protein 38 (Wdr38).